Consider the following 62-residue polypeptide: Photosystem II reaction center X protein (62 aa).

A helical transmembrane segment spans residues 26–46; that stretch reads IASFFAAALLIVIPAAAFLIF.

It belongs to the PsbX family. Type 2 subfamily. PSII consists of a core antenna complex that captures photons, and an electron transfer chain that converts photonic excitation into a charge separation. PSII forms dimeric complexes.

The protein localises to the cellular thylakoid membrane. Involved in the binding and/or turnover of quinones at the Q(B) site of Photosystem II. This is Photosystem II reaction center X protein from Prochlorococcus marinus subsp. pastoris (strain CCMP1986 / NIES-2087 / MED4).